Consider the following 71-residue polypeptide: Sec-independent protein translocase protein TatA (71 aa).

The chain crosses the membrane as a helical span at residues 1–21 (MGSFSMGHWLIVLAIIVLLFG). A compositionally biased stretch (basic and acidic residues) spans 41 to 57 (KEMEDETPVEKIEKADS). The interval 41-71 (KEMEDETPVEKIEKADSETQSTKQNETTKNV) is disordered. Residues 58–71 (ETQSTKQNETTKNV) show a composition bias toward polar residues.

It belongs to the TatA/E family. In terms of assembly, the Tat system comprises two distinct complexes: a TatABC complex, containing multiple copies of TatA, TatB and TatC subunits, and a separate TatA complex, containing only TatA subunits. Substrates initially bind to the TatABC complex, which probably triggers association of the separate TatA complex to form the active translocon.

Its subcellular location is the cell inner membrane. In terms of biological role, part of the twin-arginine translocation (Tat) system that transports large folded proteins containing a characteristic twin-arginine motif in their signal peptide across membranes. TatA could form the protein-conducting channel of the Tat system. This Campylobacter fetus subsp. fetus (strain 82-40) protein is Sec-independent protein translocase protein TatA.